The chain runs to 265 residues: tRNA pseudouridine synthase A (265 aa).

Residue Asp53 is the Nucleophile of the active site. Position 111 (Tyr111) interacts with substrate.

Belongs to the tRNA pseudouridine synthase TruA family. Homodimer.

It carries out the reaction uridine(38/39/40) in tRNA = pseudouridine(38/39/40) in tRNA. Functionally, formation of pseudouridine at positions 38, 39 and 40 in the anticodon stem and loop of transfer RNAs. This chain is tRNA pseudouridine synthase A, found in Acinetobacter baumannii (strain SDF).